A 220-amino-acid chain; its full sequence is Uracil-DNA glycosylase 1 (220 aa).

The active-site Proton acceptor is Asp-65.

Belongs to the uracil-DNA glycosylase (UDG) superfamily. UNG family.

It is found in the cytoplasm. The catalysed reaction is Hydrolyzes single-stranded DNA or mismatched double-stranded DNA and polynucleotides, releasing free uracil.. Excises uracil residues from the DNA which can arise as a result of misincorporation of dUMP residues by DNA polymerase or due to deamination of cytosine. This chain is Uracil-DNA glycosylase 1, found in Bacteroides fragilis (strain YCH46).